A 547-amino-acid chain; its full sequence is Chaperonin GroEL (547 aa).

ATP contacts are provided by residues 30 to 33 (TLGP), Lys-51, 87 to 91 (DGTTT), Gly-415, 479 to 481 (NAA), and Asp-495.

The protein belongs to the chaperonin (HSP60) family. Forms a cylinder of 14 subunits composed of two heptameric rings stacked back-to-back. Interacts with the co-chaperonin GroES.

The protein resides in the cytoplasm. The catalysed reaction is ATP + H2O + a folded polypeptide = ADP + phosphate + an unfolded polypeptide.. Its function is as follows. Together with its co-chaperonin GroES, plays an essential role in assisting protein folding. The GroEL-GroES system forms a nano-cage that allows encapsulation of the non-native substrate proteins and provides a physical environment optimized to promote and accelerate protein folding. The polypeptide is Chaperonin GroEL (Pseudomonas fluorescens (strain ATCC BAA-477 / NRRL B-23932 / Pf-5)).